The primary structure comprises 205 residues: Holliday junction branch migration complex subunit RuvA (205 aa).

Positions 1–64 (MIGRLRGVLV…EDAQLLYGFI (64 aa)) are domain I. A domain II region spans residues 65-143 (TKQERALFRL…SLMEASAGSE (79 aa)). Positions 144–156 (REFVLQSNYSPAP) are flexible linker. The tract at residues 157 to 205 (TVNSAEEDAISALISLGYKPPQASKSVSAAYKEGMDSETLIKAALKSML) is domain III.

The protein belongs to the RuvA family. In terms of assembly, homotetramer. Forms an RuvA(8)-RuvB(12)-Holliday junction (HJ) complex. HJ DNA is sandwiched between 2 RuvA tetramers; dsDNA enters through RuvA and exits via RuvB. An RuvB hexamer assembles on each DNA strand where it exits the tetramer. Each RuvB hexamer is contacted by two RuvA subunits (via domain III) on 2 adjacent RuvB subunits; this complex drives branch migration. In the full resolvosome a probable DNA-RuvA(4)-RuvB(12)-RuvC(2) complex forms which resolves the HJ.

It localises to the cytoplasm. Functionally, the RuvA-RuvB-RuvC complex processes Holliday junction (HJ) DNA during genetic recombination and DNA repair, while the RuvA-RuvB complex plays an important role in the rescue of blocked DNA replication forks via replication fork reversal (RFR). RuvA specifically binds to HJ cruciform DNA, conferring on it an open structure. The RuvB hexamer acts as an ATP-dependent pump, pulling dsDNA into and through the RuvAB complex. HJ branch migration allows RuvC to scan DNA until it finds its consensus sequence, where it cleaves and resolves the cruciform DNA. The chain is Holliday junction branch migration complex subunit RuvA from Shewanella baltica (strain OS223).